The following is a 618-amino-acid chain: D-glucuronyl C5-epimerase (618 aa).

Residues methionine 1–lysine 11 lie on the Cytoplasmic side of the membrane. A helical; Signal-anchor for type II membrane protein membrane pass occupies residues threonine 12–asparagine 29. Residues lysine 30–asparagine 618 are Lumenal-facing. Residues tyrosine 180, arginine 185 to arginine 187, glutamine 202, tyrosine 210, glutamine 213, and glutamine 216 contribute to the substrate site. 5 residues coordinate Ca(2+): threonine 238, glutamate 240, threonine 269, asparagine 270, and aspartate 393. Substrate contacts are provided by residues lysine 430–glutamate 433, glutamate 500–tyrosine 501, asparagine 511, tyrosine 515, tyrosine 561, arginine 564, and asparagine 573–threonine 582.

Belongs to the D-glucuronyl C5-epimerase family. In terms of assembly, homodimer. Interacts with HS2ST1. Widely expressed with highest levels in lung and lowest levels in spleen.

Its subcellular location is the golgi apparatus membrane. It catalyses the reaction [heparosan-N-sulfate](n) = [heparan-N-sulfate](n). Its pathway is glycan metabolism; heparan sulfate biosynthesis. It functions in the pathway glycan metabolism; heparin biosynthesis. Converts D-glucuronic acid residues adjacent to N-sulfate sugar residues to L-iduronic acid residues, both in maturing heparan sulfate (HS) and heparin chains. This is important for further modifications that determine the specificity of interactions between these glycosaminoglycans and proteins. The sequence is that of D-glucuronyl C5-epimerase (Glce) from Mus musculus (Mouse).